The chain runs to 282 residues: F-actin-capping protein subunit beta (282 aa).

Residues 73-103 (SPWSNQFDPPLDEAGSGGVGAGGNEGAGEGA) form a disordered region. Positions 87–101 (GSGGVGAGGNEGAGE) are enriched in gly residues.

It belongs to the F-actin-capping protein beta subunit family. In terms of assembly, component of the F-actin capping complex, composed of a heterodimer of an alpha and a beta subunit.

It is found in the cytoplasm. Its subcellular location is the cytoskeleton. The protein resides in the actin patch. Functionally, F-actin-capping proteins bind in a Ca(2+)-independent manner to the fast growing ends of actin filaments (barbed end) thereby blocking the exchange of subunits at these ends. Unlike other capping proteins (such as gelsolin and severin), these proteins do not sever actin filaments. In Gibberella zeae (strain ATCC MYA-4620 / CBS 123657 / FGSC 9075 / NRRL 31084 / PH-1) (Wheat head blight fungus), this protein is F-actin-capping protein subunit beta (CAP2).